We begin with the raw amino-acid sequence, 402 residues long: S-adenosylmethionine synthase (402 aa).

ATP is bound at residue His-15. Asp-17 lines the Mg(2+) pocket. Glu-43 lines the K(+) pocket. L-methionine contacts are provided by Glu-56 and Gln-99. A flexible loop region spans residues 99 to 109; it reads QSPDIAQGVDT. ATP is bound by residues 174–176, 247–248, Asp-256, 262–263, Ala-279, and Lys-283; these read DGK, RF, and RK. Asp-256 provides a ligand contact to L-methionine. L-methionine is bound at residue Lys-287.

Belongs to the AdoMet synthase family. As to quaternary structure, homotetramer; dimer of dimers. Mg(2+) serves as cofactor. It depends on K(+) as a cofactor.

It is found in the cytoplasm. It carries out the reaction L-methionine + ATP + H2O = S-adenosyl-L-methionine + phosphate + diphosphate. It participates in amino-acid biosynthesis; S-adenosyl-L-methionine biosynthesis; S-adenosyl-L-methionine from L-methionine: step 1/1. In terms of biological role, catalyzes the formation of S-adenosylmethionine (AdoMet) from methionine and ATP. The overall synthetic reaction is composed of two sequential steps, AdoMet formation and the subsequent tripolyphosphate hydrolysis which occurs prior to release of AdoMet from the enzyme. This is S-adenosylmethionine synthase from Streptomyces coelicolor (strain ATCC BAA-471 / A3(2) / M145).